The chain runs to 555 residues: Inositol 1,4,5-trisphosphate receptor-interacting protein-like 1 (555 aa).

An N-terminal signal peptide occupies residues 1–24 (MNVDAEASMAVISLLFLAVMYVVH). Topologically, residues 25–103 (HPLMVSDRMD…WPFQADGQEG (79 aa)) are extracellular. Positions 38 to 74 (LARSRQLEKRMSEEMRLLEMEFEERKRAAEQRQKAEN) form a coiled coil. Residues 104–124 (PLGWMLGNLWNTGLFCLFLVF) form a helical membrane-spanning segment. Residues 125–555 (ELLRQNMQHE…LPHAPLAAAP (431 aa)) are Cytoplasmic-facing.

Belongs to the ITPRIP family. In terms of tissue distribution, expressed in testis and tumoral cells.

It localises to the cell membrane. Functions as a ligand of CD3E, inhibiting TCR-CD3 complex signaling to regulate T cell activation. Induces stable CD3E-NCK1 binding, thereby preventing the CD3E-ZAP70 interaction and subsequently inhibiting the activation of the downstream ERK-NFkB signaling cascade and calcium influx. The sequence is that of Inositol 1,4,5-trisphosphate receptor-interacting protein-like 1 from Homo sapiens (Human).